We begin with the raw amino-acid sequence, 393 residues long: Glutamyl-tRNA reductase (393 aa).

Substrate-binding positions include 47–50 (TCGR), Ser98, 103–105 (ETD), and Gln109. The active-site Nucleophile is Cys48. 177–182 (GAGAVG) lines the NADP(+) pocket.

The protein belongs to the glutamyl-tRNA reductase family. Homodimer.

It catalyses the reaction (S)-4-amino-5-oxopentanoate + tRNA(Glu) + NADP(+) = L-glutamyl-tRNA(Glu) + NADPH + H(+). The protein operates within porphyrin-containing compound metabolism; protoporphyrin-IX biosynthesis; 5-aminolevulinate from L-glutamyl-tRNA(Glu): step 1/2. Its function is as follows. Catalyzes the NADPH-dependent reduction of glutamyl-tRNA(Glu) to glutamate 1-semialdehyde (GSA). The chain is Glutamyl-tRNA reductase from Pyrobaculum islandicum (strain DSM 4184 / JCM 9189 / GEO3).